The primary structure comprises 165 residues: RxLR effector protein CRE12 (165 aa).

The first 23 residues, 1-23, serve as a signal peptide directing secretion; the sequence is MRLAAFVLVAVAFAIIPDGRVSA. The RxLR-dEER signature appears at 40 to 59; the sequence is RLLRLNAVPQPVETGNQEER.

It belongs to the RxLR effector family.

It is found in the secreted. It localises to the host cell. Effector that is involved in host plant infection. Contributes to virulence during the early infection stage, by inhibiting plant defense responses induced by both PAMP-triggered immunity (PTI) and effector-triggered immunity (ETI). The sequence is that of RxLR effector protein CRE12 from Phytophthora infestans (strain T30-4) (Potato late blight agent).